Reading from the N-terminus, the 934-residue chain is 2-oxoglutarate dehydrogenase E1 component (934 aa).

Belongs to the alpha-ketoglutarate dehydrogenase family. As to quaternary structure, homodimer. Part of the 2-oxoglutarate dehydrogenase (OGDH) complex composed of E1 (2-oxoglutarate dehydrogenase), E2 (dihydrolipoamide succinyltransferase) and E3 (dihydrolipoamide dehydrogenase); the complex contains multiple copies of the three enzymatic components (E1, E2 and E3). Thiamine diphosphate serves as cofactor.

The enzyme catalyses N(6)-[(R)-lipoyl]-L-lysyl-[protein] + 2-oxoglutarate + H(+) = N(6)-[(R)-S(8)-succinyldihydrolipoyl]-L-lysyl-[protein] + CO2. Its function is as follows. E1 component of the 2-oxoglutarate dehydrogenase (OGDH) complex which catalyzes the decarboxylation of 2-oxoglutarate, the first step in the conversion of 2-oxoglutarate to succinyl-CoA and CO(2). This chain is 2-oxoglutarate dehydrogenase E1 component, found in Staphylococcus epidermidis (strain ATCC 35984 / DSM 28319 / BCRC 17069 / CCUG 31568 / BM 3577 / RP62A).